Here is a 311-residue protein sequence, read N- to C-terminus: Pyrimidine-specific ribonucleoside hydrolase RihA (311 aa).

Residue His-240 is part of the active site.

It belongs to the IUNH family. RihA subfamily.

Functionally, hydrolyzes with equal efficiency cytidine or uridine to ribose and cytosine or uracil, respectively. The protein is Pyrimidine-specific ribonucleoside hydrolase RihA of Escherichia coli O81 (strain ED1a).